A 138-amino-acid chain; its full sequence is Proofreading thioesterase EntH (138 aa).

The active-site Nucleophile or proton acceptor is the Glu-64.

This sequence belongs to the thioesterase PaaI family. Homotetramer. Dimer of dimers. Interacts specifically with the aryl carrier protein (ArCP) domain of EntB.

The protein resides in the cytoplasm. The protein operates within siderophore biosynthesis; enterobactin biosynthesis. In terms of biological role, required for optimal enterobactin synthesis. Acts as a proofreading enzyme that prevents EntB misacylation by hydrolyzing the thioester bound existing between EntB and wrongly charged molecules. The polypeptide is Proofreading thioesterase EntH (Citrobacter rodentium (strain ICC168) (Citrobacter freundii biotype 4280)).